We begin with the raw amino-acid sequence, 374 residues long: Golgi-associated kinase 1B (374 aa).

The Cytoplasmic segment spans residues 1 to 38; it reads MSPDRTGRGSSSSSSSLKRLVCKSFVRAWGRRRPNLRR. A helical; Signal-anchor for type II membrane protein transmembrane segment spans residues 39-61; sequence AVLLICTASAIYGIVIASQVLRG. The Extracellular segment spans residues 62–374; that stretch reads STHPGKALRK…LLQVYTRLDR (313 aa). Residues 136 to 146 are compositionally biased toward basic residues; it reads VRPKKRRKYGA. Residues 136–177 form a disordered region; the sequence is VRPKKRRKYGARRPGVVQDTESKKDTLWSKVPNSQHKSQAQS. A compositionally biased stretch (polar residues) spans 166–177; sequence VPNSQHKSQAQS. 2 N-linked (GlcNAc...) asparagine glycosylation sites follow: N281 and N314.

Belongs to the GASK family.

The protein localises to the golgi apparatus membrane. The sequence is that of Golgi-associated kinase 1B from Xenopus laevis (African clawed frog).